The chain runs to 380 residues: Probable dual-specificity RNA methyltransferase RlmN (380 aa).

Glu-123 serves as the catalytic Proton acceptor. Residues 129–362 enclose the Radical SAM core domain; the sequence is HEYGNSVCVT…VTIRREQGSD (234 aa). A disulfide bond links Cys-136 and Cys-367. [4Fe-4S] cluster is bound by residues Cys-143, Cys-147, and Cys-150. S-adenosyl-L-methionine-binding positions include 193–194, Ser-225, 248–250, and Asn-324; these read GE and SLH. Cys-367 serves as the catalytic S-methylcysteine intermediate.

The protein belongs to the radical SAM superfamily. RlmN family. The cofactor is [4Fe-4S] cluster.

The protein localises to the cytoplasm. The catalysed reaction is adenosine(2503) in 23S rRNA + 2 reduced [2Fe-2S]-[ferredoxin] + 2 S-adenosyl-L-methionine = 2-methyladenosine(2503) in 23S rRNA + 5'-deoxyadenosine + L-methionine + 2 oxidized [2Fe-2S]-[ferredoxin] + S-adenosyl-L-homocysteine. The enzyme catalyses adenosine(37) in tRNA + 2 reduced [2Fe-2S]-[ferredoxin] + 2 S-adenosyl-L-methionine = 2-methyladenosine(37) in tRNA + 5'-deoxyadenosine + L-methionine + 2 oxidized [2Fe-2S]-[ferredoxin] + S-adenosyl-L-homocysteine. In terms of biological role, specifically methylates position 2 of adenine 2503 in 23S rRNA and position 2 of adenine 37 in tRNAs. This chain is Probable dual-specificity RNA methyltransferase RlmN, found in Lysinibacillus sphaericus (strain C3-41).